Here is a 480-residue protein sequence, read N- to C-terminus: Aspartyl/glutamyl-tRNA(Asn/Gln) amidotransferase subunit B (480 aa).

It belongs to the GatB/GatE family. GatB subfamily. Heterotrimer of A, B and C subunits.

It catalyses the reaction L-glutamyl-tRNA(Gln) + L-glutamine + ATP + H2O = L-glutaminyl-tRNA(Gln) + L-glutamate + ADP + phosphate + H(+). The catalysed reaction is L-aspartyl-tRNA(Asn) + L-glutamine + ATP + H2O = L-asparaginyl-tRNA(Asn) + L-glutamate + ADP + phosphate + 2 H(+). Functionally, allows the formation of correctly charged Asn-tRNA(Asn) or Gln-tRNA(Gln) through the transamidation of misacylated Asp-tRNA(Asn) or Glu-tRNA(Gln) in organisms which lack either or both of asparaginyl-tRNA or glutaminyl-tRNA synthetases. The reaction takes place in the presence of glutamine and ATP through an activated phospho-Asp-tRNA(Asn) or phospho-Glu-tRNA(Gln). In Saccharophagus degradans (strain 2-40 / ATCC 43961 / DSM 17024), this protein is Aspartyl/glutamyl-tRNA(Asn/Gln) amidotransferase subunit B.